The chain runs to 95 residues: Aspartyl/glutamyl-tRNA(Asn/Gln) amidotransferase subunit C (95 aa).

The protein belongs to the GatC family. Heterotrimer of A, B and C subunits.

It catalyses the reaction L-glutamyl-tRNA(Gln) + L-glutamine + ATP + H2O = L-glutaminyl-tRNA(Gln) + L-glutamate + ADP + phosphate + H(+). The catalysed reaction is L-aspartyl-tRNA(Asn) + L-glutamine + ATP + H2O = L-asparaginyl-tRNA(Asn) + L-glutamate + ADP + phosphate + 2 H(+). Functionally, allows the formation of correctly charged Asn-tRNA(Asn) or Gln-tRNA(Gln) through the transamidation of misacylated Asp-tRNA(Asn) or Glu-tRNA(Gln) in organisms which lack either or both of asparaginyl-tRNA or glutaminyl-tRNA synthetases. The reaction takes place in the presence of glutamine and ATP through an activated phospho-Asp-tRNA(Asn) or phospho-Glu-tRNA(Gln). This chain is Aspartyl/glutamyl-tRNA(Asn/Gln) amidotransferase subunit C, found in Magnetococcus marinus (strain ATCC BAA-1437 / JCM 17883 / MC-1).